A 456-amino-acid polypeptide reads, in one-letter code: Bis(5'-adenosyl)-triphosphatase enpp4 (456 aa).

The signal sequence occupies residues 1 to 18 (MFNMKILVIPLFWGLVTG). Residues 19-410 (YKGNSSDSSA…DQWCINLPEA (392 aa)) lie on the Extracellular side of the membrane. Asp-37 and Thr-73 together coordinate Zn(2+). Residue Thr-73 is the AMP-threonine intermediate of the active site. Position 94 (Asn-94) interacts with substrate. N-linked (GlcNAc...) asparagine glycosylation is present at Asn-148. Tyr-157 is a binding site for substrate. Residue Asn-169 is glycosylated (N-linked (GlcNAc...) asparagine). The Zn(2+) site is built by Asp-192, His-196, Asp-240, and His-241. Substrate is bound at residue Asp-192. Cysteines 257 and 290 form a disulfide. Residues Asn-279 and Asn-330 are each glycosylated (N-linked (GlcNAc...) asparagine). Residue His-339 participates in Zn(2+) binding. Asn-389 carries N-linked (GlcNAc...) asparagine glycosylation. Cys-397 and Cys-404 are disulfide-bonded. Residues 411 to 431 (IGIVVSALLVLTMLTGLMIFM) form a helical membrane-spanning segment. Topologically, residues 432–456 (RSRASTSRPFSRLQLQEDDDDPLID) are cytoplasmic.

It belongs to the nucleotide pyrophosphatase/phosphodiesterase family. Requires Zn(2+) as cofactor.

Its subcellular location is the cell membrane. It catalyses the reaction P(1),P(3)-bis(5'-adenosyl) triphosphate + H2O = AMP + ADP + 2 H(+). Hydrolyzes extracellular Ap3A into AMP and ADP, and Ap4A into AMP and ATP. Ap3A and Ap4A are diadenosine polyphosphates thought to induce proliferation of vascular smooth muscle cells. Acts as a procoagulant, mediating platelet aggregation at the site of nascent thrombus via release of ADP from Ap3A and activation of ADP receptors. This Mus musculus (Mouse) protein is Bis(5'-adenosyl)-triphosphatase enpp4 (Enpp4).